A 143-amino-acid polypeptide reads, in one-letter code: Interferon gamma (143 aa).

Gln-1 is subject to Pyrrolidone carboxylic acid. 2 N-linked (GlcNAc...) asparagine glycosylation sites follow: Asn-25 and Asn-97.

It belongs to the type II (or gamma) interferon family. In terms of assembly, homodimer. Interacts with IFNGR1 (via extracellular domain); this interaction promotes IFNGR1 dimerization.

It is found in the secreted. In terms of biological role, type II interferon produced by immune cells such as T-cells and NK cells that plays crucial roles in antimicrobial, antiviral, and antitumor responses by activating effector immune cells and enhancing antigen presentation. Primarily signals through the JAK-STAT pathway after interaction with its receptor IFNGR1 to affect gene regulation. Upon IFNG binding, IFNGR1 intracellular domain opens out to allow association of downstream signaling components JAK2, JAK1 and STAT1, leading to STAT1 activation, nuclear translocation and transcription of IFNG-regulated genes. Many of the induced genes are transcription factors such as IRF1 that are able to further drive regulation of a next wave of transcription. Plays a role in class I antigen presentation pathway by inducing a replacement of catalytic proteasome subunits with immunoproteasome subunits. In turn, increases the quantity, quality, and repertoire of peptides for class I MHC loading. Increases the efficiency of peptide generation also by inducing the expression of activator PA28 that associates with the proteasome and alters its proteolytic cleavage preference. Up-regulates as well MHC II complexes on the cell surface by promoting expression of several key molecules such as cathepsins B/CTSB, H/CTSH, and L/CTSL. Participates in the regulation of hematopoietic stem cells during development and under homeostatic conditions by affecting their development, quiescence, and differentiation. This is Interferon gamma (IFNG) from Pan troglodytes (Chimpanzee).